The sequence spans 133 residues: Membrane protein FAM174B (133 aa).

The N-terminal stretch at 1–19 is a signal peptide; that stretch reads MWLYTFAVALIVIAQEING. Residues 20-67 lie on the Extracellular side of the membrane; it reads EPHTRPSSATPLNATLPPQEEGSAQNTTDAAVGSRLSTILRDLPTIKN. The interval 22 to 47 is disordered; that stretch reads HTRPSSATPLNATLPPQEEGSAQNTT. N-linked (GlcNAc...) asparagine glycosylation is found at Asn-32, Asn-45, and Asn-67. Residues 68–88 form a helical membrane-spanning segment; sequence ISIFICVLTTLLITCLVIKIC. Residues 89–133 are Cytoplasmic-facing; sequence RSARKIRKTRKYDIITTPAERVEMAPLNEENDEEDDSTLFDVKYR. Residues 113-133 form a disordered region; that stretch reads APLNEENDEEDDSTLFDVKYR. Residues 117–126 are compositionally biased toward acidic residues; the sequence is EENDEEDDST.

Belongs to the FAM174 family.

The protein localises to the cell membrane. The protein resides in the golgi apparatus. Functionally, essential for Golgi structural integrity. This is Membrane protein FAM174B (Fam174b) from Danio rerio (Zebrafish).